We begin with the raw amino-acid sequence, 311 residues long: Ribosomal RNA small subunit methyltransferase H (311 aa).

S-adenosyl-L-methionine is bound by residues 33–35 (GGH), Asp-53, Phe-77, Asp-98, and Gln-105.

It belongs to the methyltransferase superfamily. RsmH family.

The protein resides in the cytoplasm. It carries out the reaction cytidine(1402) in 16S rRNA + S-adenosyl-L-methionine = N(4)-methylcytidine(1402) in 16S rRNA + S-adenosyl-L-homocysteine + H(+). Its function is as follows. Specifically methylates the N4 position of cytidine in position 1402 (C1402) of 16S rRNA. This chain is Ribosomal RNA small subunit methyltransferase H, found in Thiobacillus denitrificans (strain ATCC 25259 / T1).